The chain runs to 843 residues: Speckle targeted PIP5K1A-regulated poly(A) polymerase (843 aa).

The Matrin-type zinc-finger motif lies at 25 to 55; sequence FRCLLCGVNIPNRPSLTDHLSGRRHVRLHEE. One can recognise an RRM domain in the interval 54 to 126; that stretch reads EERDKRNQQQ…ALEEPQIKLS (73 aa). Residues 134-146 show a composition bias toward basic residues; it reads PREKKEFQRKKGG. Positions 134-157 are disordered; that stretch reads PREKKEFQRKKGGSPRTLQPPDPE. Serine 215 is a binding site for ATP. 2 residues coordinate Mg(2+): aspartate 226 and aspartate 228. The UTP site is built by aspartate 226 and aspartate 228. Residues 241 to 255 are compositionally biased toward basic and acidic residues; it reads VEGKAEKEIQNREES. Positions 241 to 292 are disordered; sequence VEGKAEKEIQNREESSTDMEVSMEDPETERKEEEMEIGNSKNDEDEDVTPGL. ATP is bound at residue asparagine 354. 4 residues coordinate UTP: asparagine 354, arginine 376, tyrosine 398, and histidine 516. Residues 456 to 516 enclose the PAP-associated domain; that stretch reads SLSSLLSEFF…NIQDPFELSH (61 aa). The interval 564–837 is KA1; binds the bulging loops of U6 snRNA but is dispensable for terminal uridylyltransferase activity; that stretch reads PPTERECVGR…YLPRMVAQIQ (274 aa). The tract at residues 653–691 is disordered; that stretch reads QNNTKEASKQKSIFKTEEGMTESARRKREMTEPCMSDMT. Residues 658–670 are compositionally biased toward basic and acidic residues; it reads EASKQKSIFKTEE.

This sequence belongs to the DNA polymerase type-B-like family. As to quaternary structure, associates with the cleavage and polyadenylation specificity factor (CPSF) complex. The cofactor is Mg(2+). Mn(2+) is required as a cofactor.

The protein resides in the nucleus. It localises to the nucleolus. Its subcellular location is the nucleus speckle. The enzyme catalyses RNA(n) + UTP = RNA(n)-3'-uridine ribonucleotide + diphosphate. It carries out the reaction RNA(n) + ATP = RNA(n)-3'-adenine ribonucleotide + diphosphate. Poly(A) polymerase that creates the 3'-poly(A) tail of specific pre-mRNAs. In addition to polyadenylation, it is also required for the 3'-end cleavage of pre-mRNAs: binds to the 3'UTR of targeted pre-mRNAs and promotes the recruitment and assembly of the CPSF complex on the 3'UTR of pre-mRNAs. In addition to adenylyltransferase activity, also has uridylyltransferase activity. However, the ATP ratio is higher than UTP in cells, suggesting that it functions primarily as a poly(A) polymerase. The chain is Speckle targeted PIP5K1A-regulated poly(A) polymerase (tut1) from Xenopus tropicalis (Western clawed frog).